Consider the following 598-residue polypeptide: Transcriptional repressor tup12 (598 aa).

Residues 118 to 177 are disordered; the sequence is IASGVVPQSSKTKHGRNSVSFGKYGNAGPFNSDNSSKPLILNNGSSGGTPKNLRSPAIDS. WD repeat units lie at residues 285 to 325, 332 to 371, 374 to 413, 415 to 454, 456 to 495, 510 to 549, and 552 to 585; these read EPPI…AMVF, LITL…QQIR, DIAQ…RTVC, WDVE…KVIR, WTSS…NTIK, YKEG…RTIQ, and SPDS…ATGS.

It belongs to the WD repeat TUP1 family.

Transcriptional repressor. This is Transcriptional repressor tup12 (tup12) from Schizosaccharomyces pombe (strain 972 / ATCC 24843) (Fission yeast).